A 426-amino-acid polypeptide reads, in one-letter code: Histidine--tRNA ligase 1 (426 aa).

Belongs to the class-II aminoacyl-tRNA synthetase family. Homodimer.

It localises to the cytoplasm. The enzyme catalyses tRNA(His) + L-histidine + ATP = L-histidyl-tRNA(His) + AMP + diphosphate + H(+). In Shouchella clausii (strain KSM-K16) (Alkalihalobacillus clausii), this protein is Histidine--tRNA ligase 1.